Consider the following 202-residue polypeptide: MTIWLGSQPLVLASQSYARQMLLQNAGIPFEAIPAAIDERGVQQASGLTSPAEIAARLAEEKALAVSQRLPGRLVLGADQTLALGERTFNKPADRAKATAQLRTLSGRRHELHSAIALVRNGKTVFAETSVARMTMRQLTEAEIEAYLNEAGDAATSSVGGYQVEGLGVHLFDGIHGDHFTILGLPLVPLLNYLRQQRLLAF.

Residue D79 is the Proton acceptor of the active site.

The protein belongs to the Maf family. A divalent metal cation serves as cofactor.

The protein resides in the cytoplasm. It carries out the reaction a ribonucleoside 5'-triphosphate + H2O = a ribonucleoside 5'-phosphate + diphosphate + H(+). The catalysed reaction is a 2'-deoxyribonucleoside 5'-triphosphate + H2O = a 2'-deoxyribonucleoside 5'-phosphate + diphosphate + H(+). In terms of biological role, nucleoside triphosphate pyrophosphatase. May have a dual role in cell division arrest and in preventing the incorporation of modified nucleotides into cellular nucleic acids. This chain is Nucleoside triphosphate pyrophosphatase, found in Rhodopseudomonas palustris (strain BisB18).